A 313-amino-acid polypeptide reads, in one-letter code: MSSLRTHDDTWDIKSSVGTTAVMVAAARAVETEQPDPLIRDPYAKLLVTNSGAGVLWEAMLDPDIAARVEALDEESAAHLHHMRGYQAVRTHFFDTYFADAVAAGIRQIVILASGLDSRAYRLDWPAGTTVYEIDQPQVLAYKSTTLAENGVTPSADRREVAVDLRQDWPAALRAAGFDPTQRTAWLAEGLLMYLPAEAQDRLFTLIGELSPAGSRVAAETAPNHADERRQQMRERFKKVADEIGFEQTVDVGELMYRDDHRADVTEWLNAHGWRATAEHSTAAMRRLGRWIENVPLADDKDAFSDFVVAERR.

S-adenosyl-L-methionine is bound by residues D135 and 164-165; that span reads DL.

Belongs to the UPF0677 family.

In terms of biological role, exhibits S-adenosyl-L-methionine-dependent methyltransferase activity. The protein is Putative S-adenosyl-L-methionine-dependent methyltransferase MAV_5149 of Mycobacterium avium (strain 104).